The sequence spans 227 residues: Cytochrome c oxidase subunit 2 (227 aa).

Residues 1–26 are Mitochondrial intermembrane-facing; sequence MATWSNLSLQDGASPLMEQLSFFHDH. Residues 27-48 traverse the membrane as a helical segment; that stretch reads TMIDLLLITMIVGYSLSYMLLT. Residues 49–62 are Mitochondrial matrix-facing; sequence KYTNRNMLHGHLIE. The chain crosses the membrane as a helical span at residues 63–82; that stretch reads TIWTALPAITLIFIALPSLR. The Mitochondrial intermembrane segment spans residues 83–227; sequence LLYLLDDSSD…LFIKWLSNMM (145 aa). Residues histidine 161, cysteine 196, glutamate 198, cysteine 200, histidine 204, and methionine 207 each coordinate Cu cation. Glutamate 198 contacts Mg(2+).

This sequence belongs to the cytochrome c oxidase subunit 2 family. As to quaternary structure, component of the cytochrome c oxidase (complex IV, CIV), a multisubunit enzyme composed of a catalytic core of 3 subunits and several supernumerary subunits. The complex exists as a monomer or a dimer and forms supercomplexes (SCs) in the inner mitochondrial membrane with ubiquinol-cytochrome c oxidoreductase (cytochrome b-c1 complex, complex III, CIII). Cu cation serves as cofactor.

Its subcellular location is the mitochondrion inner membrane. The enzyme catalyses 4 Fe(II)-[cytochrome c] + O2 + 8 H(+)(in) = 4 Fe(III)-[cytochrome c] + 2 H2O + 4 H(+)(out). Its function is as follows. Component of the cytochrome c oxidase, the last enzyme in the mitochondrial electron transport chain which drives oxidative phosphorylation. The respiratory chain contains 3 multisubunit complexes succinate dehydrogenase (complex II, CII), ubiquinol-cytochrome c oxidoreductase (cytochrome b-c1 complex, complex III, CIII) and cytochrome c oxidase (complex IV, CIV), that cooperate to transfer electrons derived from NADH and succinate to molecular oxygen, creating an electrochemical gradient over the inner membrane that drives transmembrane transport and the ATP synthase. Cytochrome c oxidase is the component of the respiratory chain that catalyzes the reduction of oxygen to water. Electrons originating from reduced cytochrome c in the intermembrane space (IMS) are transferred via the dinuclear copper A center (CU(A)) of subunit 2 and heme A of subunit 1 to the active site in subunit 1, a binuclear center (BNC) formed by heme A3 and copper B (CU(B)). The BNC reduces molecular oxygen to 2 water molecules using 4 electrons from cytochrome c in the IMS and 4 protons from the mitochondrial matrix. This chain is Cytochrome c oxidase subunit 2 (COII), found in Locusta migratoria (Migratory locust).